A 187-amino-acid chain; its full sequence is MFQKKAIVIDGKGHLLGRLASVVAKSLLSGQKIVVVRCEELNISGPLSRNKLKWADFLNLTMNTNHARGHRHGRSPSKIFWRAVRGMLPHKTPRGQAALDNMKVFEGVPAPYDKVKRVVVPSALRVVKLNTTRKYTVLSRLSQEVGWKYRAVVAKLEVQRKQRSSTYYRKAALVKAYRTQALKKFSA.

The protein belongs to the universal ribosomal protein uL13 family.

The protein is Large ribosomal subunit protein uL13 (rpl13a) of Dictyostelium discoideum (Social amoeba).